The chain runs to 327 residues: Serpentine receptor class gamma-2 (327 aa).

6 helical membrane passes run L35–L55, I70–A90, M157–I177, L181–T203, I244–A264, and F277–A297.

Belongs to the nematode receptor-like protein srg family.

Its subcellular location is the membrane. The chain is Serpentine receptor class gamma-2 (srg-2) from Caenorhabditis elegans.